A 70-amino-acid polypeptide reads, in one-letter code: U2-agatoxin-Ao1n (70 aa).

Residues 1 to 20 (MRAIISLLLISAMVFYIIAA) form the signal peptide. Residues 21–34 (VPEEEGLQLSEDER) constitute a propeptide that is removed on maturation. 3 disulfides stabilise this stretch: Cys-37–Cys-53, Cys-44–Cys-58, and Cys-52–Cys-68. At Leu-69 the chain carries Leucine amide.

The protein belongs to the neurotoxin 01 (U2-agtx) family. In terms of tissue distribution, expressed by the venom gland.

The protein localises to the secreted. Its function is as follows. Insect active toxin causing rapid but reversible paralysis in crickets. No activity shown in mammals. Does not show effect on mammalian voltage-gated calcium channels. The sequence is that of U2-agatoxin-Ao1n from Agelena orientalis (Funnel-web spider).